An 83-amino-acid polypeptide reads, in one-letter code: MVVIRLARGGAKKRPFFNIVATDSRNRRDGRFIERIGFYNPVASGAEESVRIAQDRLAYWQGVGAQLSPTVARLVAQAGKAAA.

Belongs to the bacterial ribosomal protein bS16 family.

The chain is Small ribosomal subunit protein bS16 from Herminiimonas arsenicoxydans.